The chain runs to 647 residues: Cartilage acidic protein 1 (647 aa).

The first 30 residues, Met1–Ala30, serve as a signal peptide directing secretion. The FG-GAP 1; atypical repeat unit spans residues Asp48–Glu90. Residues Tyr107–Asp149 form an FG-GAP 2; atypical repeat. The FG-GAP 3; atypical repeat unit spans residues Thr285 to Asp335. The stretch at Gly397–Gly439 is one FG-GAP 4; atypical repeat. The EGF-like domain maps to Asp561–Cys607. Cystine bridges form between Cys565/Cys579, Cys572/Cys588, and Cys594/Cys607.

It is found in the secreted. It localises to the extracellular space. Its subcellular location is the extracellular matrix. In Xenopus tropicalis (Western clawed frog), this protein is Cartilage acidic protein 1 (crtac1).